A 674-amino-acid polypeptide reads, in one-letter code: L-type lectin-domain containing receptor kinase SIT1 (674 aa).

A signal peptide spans 1–27 (MRRPELIMRSLPLILFLSLGSFHLAAA). The Extracellular portion of the chain corresponds to 28–301 (AVDDQFTFDG…IARAPSNVLK (274 aa)). The segment at 31-275 (DQFTFDGFAG…VLAWSFKMDG (245 aa)) is legume-lectin like. N-linked (GlcNAc...) asparagine glycans are attached at residues Asn-42, Asn-61, Asn-143, Asn-196, Asn-219, Asn-240, and Asn-281. The chain crosses the membrane as a helical span at residues 302 to 322 (ILLPIASAALVSALAIAVLVI). Over 323-674 (HRRRRRYAEL…GNISDIPRAR (352 aa)) the chain is Cytoplasmic. The 280-residue stretch at 357-636 (FSDERLLGFG…LDGAMPLPEL (280 aa)) folds into the Protein kinase domain. ATP contacts are provided by residues 363 to 371 (LGFGGFGRV) and Lys-386. Residue Asp-482 is the Proton acceptor of the active site. Phosphothreonine is present on residues Thr-511, Thr-515, Thr-516, and Thr-521.

In the C-terminal section; belongs to the protein kinase superfamily. Ser/Thr protein kinase family. This sequence in the N-terminal section; belongs to the leguminous lectin family. In terms of assembly, interacts with B'KAPPA. Autophosphorylated at Thr-511, Thr-515 or Thr-516, and Thr-521 in response to salt stress. Dephosphorylated by phosphatase 2A in response to salt stress. As to expression, expressed in root epidermal cells.

It is found in the cell membrane. The enzyme catalyses L-seryl-[protein] + ATP = O-phospho-L-seryl-[protein] + ADP + H(+). It carries out the reaction L-threonyl-[protein] + ATP = O-phospho-L-threonyl-[protein] + ADP + H(+). With respect to regulation, activated by autophosphorylation in response to salt stress. Lectin-domain containing receptor kinase involved in salt stress response. Acts as a negative regulator of salt tolerance. Mediates salt sensitivity by phosphorylating and activating MPK3 and MPK6. Promotes ethylene production and mediates salt-induced ethylene signaling. Promotes the accumulation of reactive oxygen species (ROS) under salt stress conditions. Its kinase activity is triggered by salt stress and is required for its function in salt stress response. Phosphorylates B'KAPPA, a B regulatory subunit of phosphatase 2A (PP2A). The chain is L-type lectin-domain containing receptor kinase SIT1 from Oryza sativa subsp. japonica (Rice).